A 190-amino-acid polypeptide reads, in one-letter code: Xanthine phosphoribosyltransferase (190 aa).

The xanthine site is built by Leu-20 and Asn-27. 128–132 (ANGHA) provides a ligand contact to 5-phospho-alpha-D-ribose 1-diphosphate. Lys-156 contacts xanthine.

Belongs to the purine/pyrimidine phosphoribosyltransferase family. Xpt subfamily. In terms of assembly, homodimer.

It is found in the cytoplasm. It carries out the reaction XMP + diphosphate = xanthine + 5-phospho-alpha-D-ribose 1-diphosphate. The protein operates within purine metabolism; XMP biosynthesis via salvage pathway; XMP from xanthine: step 1/1. Converts the preformed base xanthine, a product of nucleic acid breakdown, to xanthosine 5'-monophosphate (XMP), so it can be reused for RNA or DNA synthesis. This Pseudomonas paraeruginosa (strain DSM 24068 / PA7) (Pseudomonas aeruginosa (strain PA7)) protein is Xanthine phosphoribosyltransferase.